A 123-amino-acid polypeptide reads, in one-letter code: Large ribosomal subunit protein bL19 (123 aa).

Belongs to the bacterial ribosomal protein bL19 family.

In terms of biological role, this protein is located at the 30S-50S ribosomal subunit interface and may play a role in the structure and function of the aminoacyl-tRNA binding site. The protein is Large ribosomal subunit protein bL19 of Ruegeria sp. (strain TM1040) (Silicibacter sp.).